The primary structure comprises 100 residues: MIGLNHYLIVSGLLFCIGLAGMLKRKNILLLFFSTEIMLNAINIGFVAISKYTHNLDGQMFALFIIAIAASEVAIGLGLVILWFKKYKSLDIDSLNAMKG.

The next 3 membrane-spanning stretches (helical) occupy residues 1-21 (MIGL…GLAG), 28-48 (ILLL…GFVA), and 64-84 (FIIA…ILWF).

This sequence belongs to the complex I subunit 4L family. NDH-1 is composed of 14 different subunits. Subunits NuoA, H, J, K, L, M, N constitute the membrane sector of the complex.

It localises to the cell inner membrane. It catalyses the reaction a quinone + NADH + 5 H(+)(in) = a quinol + NAD(+) + 4 H(+)(out). In terms of biological role, NDH-1 shuttles electrons from NADH, via FMN and iron-sulfur (Fe-S) centers, to quinones in the respiratory chain. The immediate electron acceptor for the enzyme in this species is believed to be ubiquinone. Couples the redox reaction to proton translocation (for every two electrons transferred, four hydrogen ions are translocated across the cytoplasmic membrane), and thus conserves the redox energy in a proton gradient. The chain is NADH-quinone oxidoreductase subunit K from Helicobacter pylori (strain P12).